We begin with the raw amino-acid sequence, 254 residues long: Tryptophan synthase alpha chain (254 aa).

Residues E48 and D59 each act as proton acceptor in the active site.

The protein belongs to the TrpA family. In terms of assembly, tetramer of two alpha and two beta chains.

The enzyme catalyses (1S,2R)-1-C-(indol-3-yl)glycerol 3-phosphate + L-serine = D-glyceraldehyde 3-phosphate + L-tryptophan + H2O. It functions in the pathway amino-acid biosynthesis; L-tryptophan biosynthesis; L-tryptophan from chorismate: step 5/5. In terms of biological role, the alpha subunit is responsible for the aldol cleavage of indoleglycerol phosphate to indole and glyceraldehyde 3-phosphate. In Desulfotalea psychrophila (strain LSv54 / DSM 12343), this protein is Tryptophan synthase alpha chain.